We begin with the raw amino-acid sequence, 756 residues long: MYDPQFEKYNQLLKLKEKADKAYYNGVGDPIMSDEEYDNLVDYMDELNPDGGVKTKVGASPSRSKSVKLPMPMNSLDKIKTQHEFDNWMKNWKPKAMLLVKEKLDGVSCLAVFTLEQNKPPKIELFTRGDGTTGTNITRLLNHGLKVGNDYCFDDMVNEDKWTTDWGCYLNAEAIDHWKKLPVKKVYIRGELIVTRKNFQTWYSNRFMNARNLVSGQVNKKSPDPKILQDIDFVPYDLVIDLKRPTMTHEVEHLLFRMIGATPVYTRFLFLSDTISTESMADYLERRKEKSDYEIDGLVIQVDDDTLFAPPDNRNPKDTVAFKIMGTTARTTVTHVEWNLSKGSKYKPTIHITPVSLSGVTISKVTGFHGKYISENKIGKGAVVLITRSGEVIPHIVSVISPAAKQDVLLPSNGVWKGVDIYYDGAEEPREITVKKMVHFFTSLGCLGLKTMTVGRLYDAGYRTVEAIVGADTKKLVLINGFRMVAQKLLPSMWVNVAKATPHELMAALNAFGEGIGLRKIQNIDCSKPEALEVIGMTKKTVETRIWPIWNDVLARVNALSRMAKSQLRKQETGSCEPEEDDDYNFGSYHPCHMPCQSSNKIWECRSRSPSAAGSASPCRPTKRRDDWFDSSESSCATETCVVESPPKKRPPMQGYVFVFTRFRDKDLERQITALGGKVLNNVNQNVTHVITKEKGPYKKPYTGKLKFALDNNLFVWSLVHLKSIVADEQEKLKRQRKCRARSPSPCGTACSTERD.

The active-site N6-AMP-lysine intermediate is K103. A compositionally biased stretch (low complexity) spans 610–620 (PSAAGSASPCR). The interval 610 to 630 (PSAAGSASPCRPTKRRDDWFD) is disordered. One can recognise a BRCT domain in the interval 648–742 (KKRPPMQGYV…LKRQRKCRAR (95 aa)).

This sequence belongs to the NAD-dependent DNA ligase family.

The catalysed reaction is NAD(+) + (deoxyribonucleotide)n-3'-hydroxyl + 5'-phospho-(deoxyribonucleotide)m = (deoxyribonucleotide)n+m + AMP + beta-nicotinamide D-nucleotide.. Functionally, catalyzes the formation of phosphodiester linkages between 5'-phosphoryl and 3'-hydroxyl groups in double-stranded DNA using NAD as a coenzyme and as the energy source for the reaction. This chain is Putative DNA ligase 052L, found in Invertebrate iridescent virus 3 (IIV-3).